The primary structure comprises 578 residues: Longifolene synthase (578 aa).

3 residues coordinate Mg(2+): D331, D335, and D475. Residues 331 to 335 (DDLYD) carry the DDXXD motif motif.

Belongs to the terpene synthase family. Tpsd subfamily. It depends on Mg(2+) as a cofactor. Mn(2+) serves as cofactor.

The enzyme catalyses (2E,6E)-farnesyl diphosphate = longifolene + diphosphate. It participates in sesquiterpene biosynthesis. Its pathway is terpene metabolism; oleoresin biosynthesis. Terpene synthase (TPS) involved in the biosynthesis of sesquiterpene natural products included in conifer oleoresin secretions and volatile emissions; these compounds contribute to biotic and abiotic stress defense against herbivores and pathogens. Catalyzes the conversion of (2E,6E)-farnesyl diphosphate (FPP) to longifolene. The polypeptide is Longifolene synthase (Picea engelmannii x Picea glauca (Hybrid white spruce)).